A 165-amino-acid chain; its full sequence is Crossover junction endodeoxyribonuclease RuvC (165 aa).

Residues D7, E67, and D140 contribute to the active site. Mg(2+)-binding residues include D7, E67, and D140.

Belongs to the RuvC family. In terms of assembly, homodimer which binds Holliday junction (HJ) DNA. The HJ becomes 2-fold symmetrical on binding to RuvC with unstacked arms; it has a different conformation from HJ DNA in complex with RuvA. In the full resolvosome a probable DNA-RuvA(4)-RuvB(12)-RuvC(2) complex forms which resolves the HJ. The cofactor is Mg(2+).

It localises to the cytoplasm. The catalysed reaction is Endonucleolytic cleavage at a junction such as a reciprocal single-stranded crossover between two homologous DNA duplexes (Holliday junction).. The RuvA-RuvB-RuvC complex processes Holliday junction (HJ) DNA during genetic recombination and DNA repair. Endonuclease that resolves HJ intermediates. Cleaves cruciform DNA by making single-stranded nicks across the HJ at symmetrical positions within the homologous arms, yielding a 5'-phosphate and a 3'-hydroxyl group; requires a central core of homology in the junction. The consensus cleavage sequence is 5'-(A/T)TT(C/G)-3'. Cleavage occurs on the 3'-side of the TT dinucleotide at the point of strand exchange. HJ branch migration catalyzed by RuvA-RuvB allows RuvC to scan DNA until it finds its consensus sequence, where it cleaves and resolves the cruciform DNA. The sequence is that of Crossover junction endodeoxyribonuclease RuvC from Halothermothrix orenii (strain H 168 / OCM 544 / DSM 9562).